Here is a 133-residue protein sequence, read N- to C-terminus: Small ribosomal subunit protein uS8 (133 aa).

This sequence belongs to the universal ribosomal protein uS8 family. As to quaternary structure, part of the 30S ribosomal subunit. Contacts proteins S5 and S12.

Functionally, one of the primary rRNA binding proteins, it binds directly to 16S rRNA central domain where it helps coordinate assembly of the platform of the 30S subunit. The sequence is that of Small ribosomal subunit protein uS8 from Deinococcus deserti (strain DSM 17065 / CIP 109153 / LMG 22923 / VCD115).